A 172-amino-acid chain; its full sequence is Large ribosomal subunit protein uL10 (172 aa).

It belongs to the universal ribosomal protein uL10 family. Part of the ribosomal stalk of the 50S ribosomal subunit. The N-terminus interacts with L11 and the large rRNA to form the base of the stalk. The C-terminus forms an elongated spine to which L12 dimers bind in a sequential fashion forming a multimeric L10(L12)X complex.

In terms of biological role, forms part of the ribosomal stalk, playing a central role in the interaction of the ribosome with GTP-bound translation factors. The chain is Large ribosomal subunit protein uL10 from Nitrobacter hamburgensis (strain DSM 10229 / NCIMB 13809 / X14).